Consider the following 380-residue polypeptide: MASLRKSHPLLKIANDALVDLPAPSNISVWWNFGSLLGLCLITQILTGLFLAMHYTSDIATAFTSVAHICRDVNYGWLIRNIHANGASFFFICIYLHIGRGLYYGSFLYKETWNVGVILLLLVMMTAFVGYVLPWGQMSFWGATVITNLLSAVPYVGNTLVQWIWGGFSVDNATLTRFFAFHFLFPFVIAAATVIHLIFLHETGSNNPTGLNSDSDKVPFHPYFSYKDLLGFAALLIALAALALFSPNLLGDPDNFTPANPLVTPPHIKPEWYFLFAYAILRSIPNKLGGVLALLFSILILMLVPILHTSKQRSLMFRPFSQFLFWSLVADVMILTWIGGMPVEHPFVIIGQVASFLYFFLFLVMIPVTGWLENKILGWQ.

The next 4 helical transmembrane spans lie at 33 to 53 (FGSL…FLAM), 77 to 98 (WLIR…YLHI), 113 to 133 (WNVG…GYVL), and 178 to 198 (FFAF…IHLI). Residues histidine 83 and histidine 97 each contribute to the heme b site. 2 residues coordinate heme b: histidine 182 and histidine 196. Position 201 (histidine 201) interacts with a ubiquinone. A run of 4 helical transmembrane segments spans residues 226-246 (YKDL…ALFS), 288-308 (LGGV…PILH), 320-340 (FSQF…WIGG), and 347-367 (FVII…VMIP).

The protein belongs to the cytochrome b family. In terms of assembly, the cytochrome bc1 complex contains 3 respiratory subunits (MT-CYB, CYC1 and UQCRFS1), 2 core proteins (UQCRC1 and UQCRC2) and probably 6 low-molecular weight proteins. The cofactor is heme b.

It localises to the mitochondrion inner membrane. Functionally, component of the ubiquinol-cytochrome c reductase complex (complex III or cytochrome b-c1 complex) that is part of the mitochondrial respiratory chain. The b-c1 complex mediates electron transfer from ubiquinol to cytochrome c. Contributes to the generation of a proton gradient across the mitochondrial membrane that is then used for ATP synthesis. This is Cytochrome b (mt-cyb) from Paralichthys olivaceus (Bastard halibut).